The sequence spans 663 residues: Probable serine/threonine-protein kinase DDB_G0283301 (663 aa).

Residues 312 to 586 enclose the Protein kinase domain; it reads IERRNELGRG…EECVERLITL (275 aa). ATP is bound by residues 318 to 326 and Lys-348; that span reads LGRGGNGTV. Asp-440 acts as the Proton acceptor in catalysis.

The protein belongs to the protein kinase superfamily. Ser/Thr protein kinase family.

The catalysed reaction is L-seryl-[protein] + ATP = O-phospho-L-seryl-[protein] + ADP + H(+). It catalyses the reaction L-threonyl-[protein] + ATP = O-phospho-L-threonyl-[protein] + ADP + H(+). The chain is Probable serine/threonine-protein kinase DDB_G0283301 from Dictyostelium discoideum (Social amoeba).